The following is a 298-amino-acid chain: MTAYQAIDRHASGHRFDTERRWAAALELGFEARAESEPTPVTRLVRRRHHGPLRVQRPFYPEGKTGCCHVYLLHPPGGLVSGDELRIEATVAEGGHALLTTPAAAKLYKADSHGVAWGQHTRLQVAKDAILEYLPQETIAFDGSRGLQTTTIELATGARTLGWEVLALGRPASDLPFATGALEQRFHLSLDGQPLWLERQLLDPKHRRFNGPWGQGGATVQATLWAVGLDDEAAAIDVLRAQLPDHNRWAVTRRRGVLLLRYLGTERNEAWALCEQAWHLLRPMLASVPAHTPRIWLT.

Belongs to the UreD family. UreD, UreF and UreG form a complex that acts as a GTP-hydrolysis-dependent molecular chaperone, activating the urease apoprotein by helping to assemble the nickel containing metallocenter of UreC. The UreE protein probably delivers the nickel.

The protein localises to the cytoplasm. Its function is as follows. Required for maturation of urease via the functional incorporation of the urease nickel metallocenter. This Marinobacter nauticus (strain ATCC 700491 / DSM 11845 / VT8) (Marinobacter aquaeolei) protein is Urease accessory protein UreD.